The chain runs to 61 residues: Small ribosomal subunit protein uS14 (61 aa).

Zn(2+) is bound by residues Cys-24, Cys-27, Cys-40, and Cys-43.

This sequence belongs to the universal ribosomal protein uS14 family. Zinc-binding uS14 subfamily. In terms of assembly, part of the 30S ribosomal subunit. Contacts proteins S3 and S10. It depends on Zn(2+) as a cofactor.

In terms of biological role, binds 16S rRNA, required for the assembly of 30S particles and may also be responsible for determining the conformation of the 16S rRNA at the A site. The chain is Small ribosomal subunit protein uS14 from Geotalea uraniireducens (strain Rf4) (Geobacter uraniireducens).